The sequence spans 153 residues: Ribonuclease H (153 aa).

The 142-residue stretch at 1 to 142 (MTDQIEIFTD…ADELARRGVD (142 aa)) folds into the RNase H type-1 domain. Mg(2+) contacts are provided by D10, E48, D70, and D134.

Belongs to the RNase H family. As to quaternary structure, monomer. Mg(2+) is required as a cofactor.

It is found in the cytoplasm. It catalyses the reaction Endonucleolytic cleavage to 5'-phosphomonoester.. Endonuclease that specifically degrades the RNA of RNA-DNA hybrids. The chain is Ribonuclease H from Aromatoleum aromaticum (strain DSM 19018 / LMG 30748 / EbN1) (Azoarcus sp. (strain EbN1)).